We begin with the raw amino-acid sequence, 100 residues long: uncharacterized protein (100 aa).

This is an uncharacterized protein from Escherichia phage P2 (Bacteriophage P2).